The sequence spans 163 residues: Neurotrophin-3 (163 aa).

The signal sequence occupies residues 1–3 (IQS). Positions 4–119 (TSMDQGILTE…VLNRTSRRKR (116 aa)) are excised as a propeptide. Asn-112 carries an N-linked (GlcNAc...) asparagine glycan. Positions 113 to 133 (RTSRRKREGKSHRGEYSVCDS) are disordered. Over residues 123-133 (SHRGEYSVCDS) the composition is skewed to basic and acidic residues.

Belongs to the NGF-beta family.

It localises to the secreted. Seems to promote the survival of visceral and proprioceptive sensory neurons. This is Neurotrophin-3 (NTF3) from Charina bottae (Northern rubber boa).